The primary structure comprises 246 residues: ATP synthase subunit a, chloroplastic (246 aa).

5 helical membrane-spanning segments follow: residues 35-55, 94-114, 132-152, 198-218, and 219-239; these read AQVLITSWIVIGLILGLTFLA, IPFIGTMFLFIFVSNWSGALI, DINTTVALALLTSVAYFYAGL, LVVAVLVSLVPLVVPIPMMFL, and GLFTSAIQALIFATLAAAYIG.

Belongs to the ATPase A chain family. As to quaternary structure, F-type ATPases have 2 components, CF(1) - the catalytic core - and CF(0) - the membrane proton channel. CF(1) has five subunits: alpha(3), beta(3), gamma(1), delta(1), epsilon(1). CF(0) has four main subunits: a, b, b' and c.

It is found in the plastid. Its subcellular location is the chloroplast thylakoid membrane. In terms of biological role, key component of the proton channel; it plays a direct role in the translocation of protons across the membrane. The protein is ATP synthase subunit a, chloroplastic of Chara vulgaris (Common stonewort).